The chain runs to 120 residues: Glycine cleavage system H protein (120 aa).

One can recognise a Lipoyl-binding domain in the interval 17–99 (VATVGITAHA…QGGGWLYRLK (83 aa)). Lys58 bears the N6-lipoyllysine mark.

The protein belongs to the GcvH family. The glycine cleavage system is composed of four proteins: P, T, L and H. The cofactor is (R)-lipoate.

In terms of biological role, the glycine cleavage system catalyzes the degradation of glycine. The H protein shuttles the methylamine group of glycine from the P protein to the T protein. The chain is Glycine cleavage system H protein from Methylorubrum extorquens (strain CM4 / NCIMB 13688) (Methylobacterium extorquens).